A 79-amino-acid polypeptide reads, in one-letter code: MAKATKPADLRAKTAEELEALLIDLKREQFNLRFQRATGQNEGQARVRTVRREIARVKTIASQALKKNAVGAGAPAAKS.

This sequence belongs to the universal ribosomal protein uL29 family.

The protein is Large ribosomal subunit protein uL29 of Gluconacetobacter diazotrophicus (strain ATCC 49037 / DSM 5601 / CCUG 37298 / CIP 103539 / LMG 7603 / PAl5).